Here is a 24-residue protein sequence, read N- to C-terminus: Positive regulator of RepFIC repA1 expression (24 aa).

This Escherichia coli protein is Positive regulator of RepFIC repA1 expression (repL).